The chain runs to 545 residues: Probable protein kinase UbiB (545 aa).

In terms of domain architecture, Protein kinase spans 123–501; that stretch reads DFDIVPLASA…RVRQHQSHYL (379 aa). ATP-binding positions include 129–137 and K152; that span reads LASASIAQV. D287 acts as the Proton acceptor in catalysis. Transmembrane regions (helical) follow at residues 498-518 and 521-541; these read SHYL…VVLS and EWDG…LVGW.

It belongs to the ABC1 family. UbiB subfamily.

It is found in the cell inner membrane. It participates in cofactor biosynthesis; ubiquinone biosynthesis [regulation]. Functionally, is probably a protein kinase regulator of UbiI activity which is involved in aerobic coenzyme Q (ubiquinone) biosynthesis. In Erwinia tasmaniensis (strain DSM 17950 / CFBP 7177 / CIP 109463 / NCPPB 4357 / Et1/99), this protein is Probable protein kinase UbiB.